The following is a 233-amino-acid chain: Adapter protein MecA (233 aa).

The protein belongs to the MecA family. As to quaternary structure, homodimer.

Functionally, enables the recognition and targeting of unfolded and aggregated proteins to the ClpC protease or to other proteins involved in proteolysis. The chain is Adapter protein MecA from Lactococcus lactis subsp. lactis (strain IL1403) (Streptococcus lactis).